A 513-amino-acid chain; its full sequence is ATP synthase subunit alpha (513 aa).

Residue 169-176 (GDRQTGKT) coordinates ATP.

It belongs to the ATPase alpha/beta chains family. As to quaternary structure, F-type ATPases have 2 components, CF(1) - the catalytic core - and CF(0) - the membrane proton channel. CF(1) has five subunits: alpha(3), beta(3), gamma(1), delta(1), epsilon(1). CF(0) has three main subunits: a(1), b(2) and c(9-12). The alpha and beta chains form an alternating ring which encloses part of the gamma chain. CF(1) is attached to CF(0) by a central stalk formed by the gamma and epsilon chains, while a peripheral stalk is formed by the delta and b chains.

The protein localises to the cell inner membrane. It carries out the reaction ATP + H2O + 4 H(+)(in) = ADP + phosphate + 5 H(+)(out). Its function is as follows. Produces ATP from ADP in the presence of a proton gradient across the membrane. The alpha chain is a regulatory subunit. The polypeptide is ATP synthase subunit alpha (Edwardsiella ictaluri (strain 93-146)).